We begin with the raw amino-acid sequence, 227 residues long: Phosphoribosylformylglycinamidine synthase subunit PurQ (227 aa).

Residues 3-225 (FAVIVLPGSN…VKNWRETHVT (223 aa)) enclose the Glutamine amidotransferase type-1 domain. Cys-86 acts as the Nucleophile in catalysis. Active-site residues include His-194 and Glu-196.

Part of the FGAM synthase complex composed of 1 PurL, 1 PurQ and 2 PurS subunits.

It localises to the cytoplasm. It carries out the reaction N(2)-formyl-N(1)-(5-phospho-beta-D-ribosyl)glycinamide + L-glutamine + ATP + H2O = 2-formamido-N(1)-(5-O-phospho-beta-D-ribosyl)acetamidine + L-glutamate + ADP + phosphate + H(+). It catalyses the reaction L-glutamine + H2O = L-glutamate + NH4(+). It functions in the pathway purine metabolism; IMP biosynthesis via de novo pathway; 5-amino-1-(5-phospho-D-ribosyl)imidazole from N(2)-formyl-N(1)-(5-phospho-D-ribosyl)glycinamide: step 1/2. In terms of biological role, part of the phosphoribosylformylglycinamidine synthase complex involved in the purines biosynthetic pathway. Catalyzes the ATP-dependent conversion of formylglycinamide ribonucleotide (FGAR) and glutamine to yield formylglycinamidine ribonucleotide (FGAM) and glutamate. The FGAM synthase complex is composed of three subunits. PurQ produces an ammonia molecule by converting glutamine to glutamate. PurL transfers the ammonia molecule to FGAR to form FGAM in an ATP-dependent manner. PurS interacts with PurQ and PurL and is thought to assist in the transfer of the ammonia molecule from PurQ to PurL. This is Phosphoribosylformylglycinamidine synthase subunit PurQ from Bacillus subtilis (strain 168).